Reading from the N-terminus, the 111-residue chain is Probable 4-amino-4-deoxy-L-arabinose-phosphoundecaprenol flippase subunit ArnE (111 aa).

The next 3 membrane-spanning stretches (helical) occupy residues leucine 37–leucine 57, glutamine 65–phenylalanine 85, and leucine 91–isoleucine 111.

The protein belongs to the ArnE family. In terms of assembly, heterodimer of ArnE and ArnF.

It is found in the cell inner membrane. Its pathway is bacterial outer membrane biogenesis; lipopolysaccharide biosynthesis. Its function is as follows. Translocates 4-amino-4-deoxy-L-arabinose-phosphoundecaprenol (alpha-L-Ara4N-phosphoundecaprenol) from the cytoplasmic to the periplasmic side of the inner membrane. In Hamiltonella defensa subsp. Acyrthosiphon pisum (strain 5AT), this protein is Probable 4-amino-4-deoxy-L-arabinose-phosphoundecaprenol flippase subunit ArnE.